The following is a 248-amino-acid chain: Pyridoxine 5'-phosphate synthase (248 aa).

N7 lines the 3-amino-2-oxopropyl phosphate pocket. 9–10 (DH) contributes to the 1-deoxy-D-xylulose 5-phosphate binding site. R18 is a binding site for 3-amino-2-oxopropyl phosphate. H43 serves as the catalytic Proton acceptor. 1-deoxy-D-xylulose 5-phosphate-binding residues include R45 and H50. E70 serves as the catalytic Proton acceptor. Residue T100 coordinates 1-deoxy-D-xylulose 5-phosphate. The Proton donor role is filled by H191. 3-amino-2-oxopropyl phosphate is bound by residues G192 and 213 to 214 (GH).

It belongs to the PNP synthase family. As to quaternary structure, homooctamer; tetramer of dimers.

The protein localises to the cytoplasm. The enzyme catalyses 3-amino-2-oxopropyl phosphate + 1-deoxy-D-xylulose 5-phosphate = pyridoxine 5'-phosphate + phosphate + 2 H2O + H(+). It functions in the pathway cofactor biosynthesis; pyridoxine 5'-phosphate biosynthesis; pyridoxine 5'-phosphate from D-erythrose 4-phosphate: step 5/5. In terms of biological role, catalyzes the complicated ring closure reaction between the two acyclic compounds 1-deoxy-D-xylulose-5-phosphate (DXP) and 3-amino-2-oxopropyl phosphate (1-amino-acetone-3-phosphate or AAP) to form pyridoxine 5'-phosphate (PNP) and inorganic phosphate. In Bordetella bronchiseptica (strain ATCC BAA-588 / NCTC 13252 / RB50) (Alcaligenes bronchisepticus), this protein is Pyridoxine 5'-phosphate synthase.